The sequence spans 211 residues: Shikimate kinase (211 aa).

The interval 1 to 22 (MHFRYNYRMQRSKTPNTKNSDT) is disordered. Residues 12-22 (SKTPNTKNSDT) are compositionally biased toward polar residues. Position 36–41 (36–41 (GSGKTT)) interacts with ATP. Residue threonine 40 coordinates Mg(2+). Substrate is bound by residues aspartate 58, arginine 82, and glycine 104. Arginine 142 is an ATP binding site. Residue arginine 161 participates in substrate binding. Glutamine 178 is an ATP binding site.

This sequence belongs to the shikimate kinase family. In terms of assembly, monomer. Mg(2+) is required as a cofactor.

The protein localises to the cytoplasm. The enzyme catalyses shikimate + ATP = 3-phosphoshikimate + ADP + H(+). The protein operates within metabolic intermediate biosynthesis; chorismate biosynthesis; chorismate from D-erythrose 4-phosphate and phosphoenolpyruvate: step 5/7. Its function is as follows. Catalyzes the specific phosphorylation of the 3-hydroxyl group of shikimic acid using ATP as a cosubstrate. In Nitrosomonas europaea (strain ATCC 19718 / CIP 103999 / KCTC 2705 / NBRC 14298), this protein is Shikimate kinase.